Here is a 576-residue protein sequence, read N- to C-terminus: Arginine--tRNA ligase (576 aa).

Residues 122-132 carry the 'HIGH' region motif; it reads PNVAKQMHVGH.

Belongs to the class-I aminoacyl-tRNA synthetase family. In terms of assembly, monomer.

The protein resides in the cytoplasm. It catalyses the reaction tRNA(Arg) + L-arginine + ATP = L-arginyl-tRNA(Arg) + AMP + diphosphate. The protein is Arginine--tRNA ligase of Yersinia pseudotuberculosis serotype I (strain IP32953).